Here is a 320-residue protein sequence, read N- to C-terminus: Polynucleotide 5'-triphosphatase CTL1 (320 aa).

The span at 1-12 (MSDQPETPSNSR) shows a compositional bias: polar residues. A disordered region spans residues 1–23 (MSDQPETPSNSRNSHENVGAKKA). Basic and acidic residues predominate over residues 13 to 23 (NSHENVGAKKA).

It belongs to the fungal TPase family. The cofactor is Mg(2+). Mn(2+) serves as cofactor.

It localises to the cytoplasm. It is found in the nucleus. It catalyses the reaction a 5'-end triphospho-ribonucleoside in mRNA + H2O = a 5'-end diphospho-ribonucleoside in mRNA + phosphate + H(+). Probably involved in an RNA processing event other than mRNA capping. Releases gamma-phosphate from the 5'-end of RNA to produce a diphosphate terminus. The sequence is that of Polynucleotide 5'-triphosphatase CTL1 from Saccharomyces cerevisiae (strain ATCC 204508 / S288c) (Baker's yeast).